The following is a 172-amino-acid chain: Peptide deformylase (172 aa).

2 residues coordinate Fe cation: Cys-91 and His-133. Glu-134 is a catalytic residue. His-137 lines the Fe cation pocket.

It belongs to the polypeptide deformylase family. Fe(2+) serves as cofactor.

The enzyme catalyses N-terminal N-formyl-L-methionyl-[peptide] + H2O = N-terminal L-methionyl-[peptide] + formate. Removes the formyl group from the N-terminal Met of newly synthesized proteins. Requires at least a dipeptide for an efficient rate of reaction. N-terminal L-methionine is a prerequisite for activity but the enzyme has broad specificity at other positions. This is Peptide deformylase from Vibrio campbellii (strain ATCC BAA-1116).